A 185-amino-acid polypeptide reads, in one-letter code: Large ribosomal subunit protein uL5 (185 aa).

This sequence belongs to the universal ribosomal protein uL5 family. As to quaternary structure, part of the 50S ribosomal subunit; part of the 5S rRNA/L5/L18/L25 subcomplex. Contacts the 5S rRNA and the P site tRNA. Forms a bridge to the 30S subunit in the 70S ribosome.

Its function is as follows. This is one of the proteins that bind and probably mediate the attachment of the 5S RNA into the large ribosomal subunit, where it forms part of the central protuberance. In the 70S ribosome it contacts protein S13 of the 30S subunit (bridge B1b), connecting the 2 subunits; this bridge is implicated in subunit movement. Contacts the P site tRNA; the 5S rRNA and some of its associated proteins might help stabilize positioning of ribosome-bound tRNAs. This Chelativorans sp. (strain BNC1) protein is Large ribosomal subunit protein uL5.